The following is a 716-amino-acid chain: MGWLPLLLLLVQCSRALGQRSPLNDFQLFRGTELRNLLHTAVPGPWQEDVADAEECARRCGPLLDCRAFHYNMSSHGCQLLPWTQHSLHTQLYHSSLCHLFQKKDYVRTCIMDNGVSYRGTVARTAGGLPCQAWSRRFPNDHKYTPTPKNGLEENFCRNPDGDPRGPWCYTTNRSVRFQSCGIKTCREAVCVLCNGEDYRGEVDVTESGRECQRWDLQHPHSHPFQPEKFLDKDLKDNYCRNPDGSERPWCYTTDPNVEREFCDLPSCGPNLPPTVKGSKSQRRNKGKALNCFRGKGEDYRGTTNTTSAGVPCQRWDAQSPHQHRFVPEKYACKDLRENFCRNPDGSEAPWCFTSRPGLRMAFCHQIPRCTEELVPEGCYHGSGEQYRGSVSKTRKGVQCQHWSSETPHKPQFTPTSAPQAGLEANFCRNPDGDSHGPWCYTLDPDILFDYCALQRCDDDQPPSILDPPDQVVFEKCGKRVDKSNKLRVVGGHPGNSPWTVSLRNRQGQHFCGGSLVKEQWVLTARQCIWSCHEPLTGYEVWLGTINQNPQPGEANLQRVPVAKAVCGPAGSQLVLLKLERPVILNHHVALICLPPEQYVVPPGTKCEIAGWGESIGTSNNTVLHVASMNVISNQECNTKYRGHIQESEICTQGLVVPVGACEGDYGGPLACYTHDCWVLQGLIIPNRVCARPRWPAIFTRVSVFVDWINKVMQLE.

An N-terminal signal peptide occupies residues 1-18; the sequence is MGWLPLLLLLVQCSRALG. The PAN domain occupies 19 to 105; that stretch reads QRSPLNDFQL…SLCHLFQKKD (87 aa). 20 disulfide bridges follow: Cys-56–Cys-78, Cys-60–Cys-66, Cys-110–Cys-186, Cys-131–Cys-169, Cys-157–Cys-181, Cys-191–Cys-268, Cys-194–Cys-333, Cys-212–Cys-251, Cys-240–Cys-263, Cys-292–Cys-370, Cys-313–Cys-352, Cys-341–Cys-364, Cys-379–Cys-457, Cys-400–Cys-440, Cys-428–Cys-452, Cys-477–Cys-593, Cys-512–Cys-528, Cys-607–Cys-672, Cys-637–Cys-651, and Cys-662–Cys-690. Asn-72 carries an N-linked (GlcNAc...) asparagine glycan. Kringle domains lie at 110 to 186, 191 to 268, 292 to 370, and 379 to 457; these read CIMD…IKTC, CVLC…LPSC, CFRG…IPRC, and CYHG…LQRC. N-linked (GlcNAc...) asparagine glycosylation occurs at Asn-173. Asn-305 carries an N-linked (GlcNAc...) asparagine glycan. A Peptidase S1 domain is found at 489–714; the sequence is VVGGHPGNSP…FVDWINKVMQ (226 aa). Residue Asn-620 is glycosylated (N-linked (GlcNAc...) asparagine).

This sequence belongs to the peptidase S1 family. Plasminogen subfamily. Dimer of an alpha chain and a beta chain linked by a disulfide bond. Interacts (via beta chain) with MST1R (via SEMA domain). In terms of processing, cleaved after Arg-488, probably by HPN/Hepsin, to yield the active form consisting of two disulfide-linked chains. In terms of tissue distribution, liver. Lower levels in lung, placenta and adrenal.

The protein resides in the secreted. The protein is Hepatocyte growth factor-like protein (Mst1) of Mus musculus (Mouse).